Reading from the N-terminus, the 379-residue chain is Protein RecA (379 aa).

ATP is bound at residue 79 to 86 (GPESSGKT).

The protein belongs to the RecA family.

It is found in the cytoplasm. Functionally, can catalyze the hydrolysis of ATP in the presence of single-stranded DNA, the ATP-dependent uptake of single-stranded DNA by duplex DNA, and the ATP-dependent hybridization of homologous single-stranded DNAs. It interacts with LexA causing its activation and leading to its autocatalytic cleavage. In Streptococcus agalactiae serotype III (strain NEM316), this protein is Protein RecA.